The following is a 470-amino-acid chain: Glutamate--tRNA ligase (470 aa).

A 'HIGH' region motif is present at residues 9-19 (PSPTGFLHVGG). Residues 236–240 (RLSKR) carry the 'KMSKS' region motif. Lys239 contributes to the ATP binding site.

This sequence belongs to the class-I aminoacyl-tRNA synthetase family. Glutamate--tRNA ligase type 1 subfamily. In terms of assembly, monomer.

Its subcellular location is the cytoplasm. The catalysed reaction is tRNA(Glu) + L-glutamate + ATP = L-glutamyl-tRNA(Glu) + AMP + diphosphate. In terms of biological role, catalyzes the attachment of glutamate to tRNA(Glu) in a two-step reaction: glutamate is first activated by ATP to form Glu-AMP and then transferred to the acceptor end of tRNA(Glu). This Legionella pneumophila (strain Paris) protein is Glutamate--tRNA ligase.